The primary structure comprises 432 residues: Sensor histidine kinase YrkQ (432 aa).

Topologically, residues 1–12 (MAHLKFTLTKKL) are cytoplasmic. The chain crosses the membrane as a helical span at residues 13-33 (ALLIMVAAIVSGVIFLTLQKI). The Extracellular segment spans residues 34-145 (TDDLIEGYLS…GFYSSRYYDL (112 aa)). A helical transmembrane segment spans residues 146–166 (AFALDLLGATLIFLIIVLFGI). One can recognise an HAMP domain in the interval 167–219 (RQSLRYLKTIHQEIHILEGGELDYEMTIKGHDELAMIAKSIEDLRKAFLDKLK). The Cytoplasmic portion of the chain corresponds to 167–432 (RQSLRYLKTI…IVLRFWNTKM (266 aa)). Residues 234–432 (EMSHDMRTPL…IVLRFWNTKM (199 aa)) form the Histidine kinase domain. A Phosphohistidine; by autocatalysis modification is found at H237.

Its subcellular location is the cell membrane. It carries out the reaction ATP + protein L-histidine = ADP + protein N-phospho-L-histidine.. In terms of biological role, member of the two-component regulatory system YrkQ/YrkP. Probably activates YrkP by phosphorylation. The polypeptide is Sensor histidine kinase YrkQ (yrkQ) (Bacillus subtilis (strain 168)).